The following is a 953-amino-acid chain: Coatomer subunit beta (953 aa).

N-acetylthreonine is present on Thr2. 6 HEAT repeats span residues 96-131, 132-168, 240-276, 277-314, 316-353, and 396-433; these read HEMI…KEAE, LLEP…NFEH, SERA…SAPT, AIKA…HPAH, RVLQ…SRNV, and DMAA…RFDN. Lys494 is modified (N6-acetyllysine).

Oligomeric complex that consists of at least the alpha, beta, beta', gamma, delta, epsilon and zeta subunits. Interacts with CAPN8 and PRKCE. Interacts with SCYL1. Interacts with COPG1. Interacts with ARF1 (myristoylated); this interaction is required for binding of COPB1 to Golgi membranes. Interacts (via trunk domain) with ARF1 (via switch I region); the interaction is direct. Interacts with KCNK2 (via N-terminus); this interaction increases the channel-mediated whole cell currents and promotes plasma membrane expression of KCNK2. Interacts with STX17. Interacts with TMEM115. Interacts with TMEM41B. High expression in the lung, kidney, skeletal muscle and small intestine, and lower level of expression in heart, liver, spleen, stomach and fat.

The protein localises to the cytoplasm. The protein resides in the golgi apparatus membrane. Its subcellular location is the cytoplasmic vesicle. It localises to the COPI-coated vesicle membrane. It is found in the cell membrane. The protein localises to the endoplasmic reticulum-Golgi intermediate compartment. Its function is as follows. The coatomer is a cytosolic protein complex that binds to dilysine motifs and reversibly associates with Golgi non-clathrin-coated vesicles, which further mediate biosynthetic protein transport from the ER, via the Golgi up to the trans Golgi network. Coatomer complex is required for budding from Golgi membranes, and is essential for the retrograde Golgi-to-ER transport of dilysine-tagged proteins. In mammals, the coatomer can only be recruited by membranes associated to ADP-ribosylation factors (ARFs), which are small GTP-binding proteins; the complex also influences the Golgi structural integrity, as well as the processing, activity, and endocytic recycling of LDL receptors. Plays a functional role in facilitating the transport of kappa-type opioid receptor mRNAs into axons and enhances translation of these proteins. Required for limiting lipid storage in lipid droplets. Involved in lipid homeostasis by regulating the presence of perilipin family members PLIN2 and PLIN3 at the lipid droplet surface and promoting the association of adipocyte surface triglyceride lipase (PNPLA2) with the lipid droplet to mediate lipolysis. Involved in the Golgi disassembly and reassembly processes during cell cycle. Involved in autophagy by playing a role in early endosome function. Plays a role in organellar compartmentalization of secretory compartments including endoplasmic reticulum (ER)-Golgi intermediate compartment (ERGIC), Golgi, trans-Golgi network (TGN) and recycling endosomes, and in biosynthetic transport of CAV1. The polypeptide is Coatomer subunit beta (Sus scrofa (Pig)).